A 468-amino-acid chain; its full sequence is Putative chitinase 1 (468 aa).

A signal peptide spans 1–21 (MDFYSSLLPFLILIYLEFCSG). The GH18 domain maps to 22–381 (FNRVCYYNGW…MSIIHGLGEY (360 aa)). Cys26 and Cys51 form a disulfide bridge. Chitin contacts are provided by residues 73 to 74 (VF) and 100 to 103 (GGWD). Glu143 (proton donor) is an active-site residue. Residues Tyr144, 213–216 (KMYD), and Trp353 each bind chitin. Residues 386–440 (SDTLEAEREMINKKIRKAAREISYYSDKGNSTMAKKMEDKLNQLKDHLSAVQAHQ) are a coiled coil.

Belongs to the glycosyl hydrolase 18 family. Prismatic layer of shell (at protein level). Expressed primarily in the mantle with highest level in the outer epithelium of the mantle edge and lower level in the mantle pallium.

The protein localises to the secreted. It carries out the reaction Random endo-hydrolysis of N-acetyl-beta-D-glucosaminide (1-&gt;4)-beta-linkages in chitin and chitodextrins.. The sequence is that of Putative chitinase 1 from Margaritifera margaritifera (Freshwater pearl mussel).